A 116-amino-acid chain; its full sequence is Large ribosomal subunit protein bL17 (116 aa).

Belongs to the bacterial ribosomal protein bL17 family. As to quaternary structure, part of the 50S ribosomal subunit. Contacts protein L32.

This is Large ribosomal subunit protein bL17 from Helicobacter pylori (strain J99 / ATCC 700824) (Campylobacter pylori J99).